Reading from the N-terminus, the 424-residue chain is Adenylyltransferase and sulfurtransferase UBA4 (424 aa).

ATP contacts are provided by residues glycine 76, aspartate 97, 104-108 (TNLHR), lysine 121, and 165-166 (DS). Residues cysteine 206 and cysteine 209 each contribute to the Zn(2+) site. Cysteine 223 serves as the catalytic Glycyl thioester intermediate; for adenylyltransferase activity. Cysteine 283 lines the Zn(2+) pocket. Residues 326–422 (RNSDHVLLDV…WYSEVDQNIP (97 aa)) form the Rhodanese domain. The Cysteine persulfide intermediate; for sulfurtransferase activity role is filled by cysteine 382.

This sequence in the N-terminal section; belongs to the HesA/MoeB/ThiF family. UBA4 subfamily. Zn(2+) is required as a cofactor.

It localises to the cytoplasm. It is found in the cytosol. It participates in tRNA modification; 5-methoxycarbonylmethyl-2-thiouridine-tRNA biosynthesis. Its function is as follows. Plays a central role in 2-thiolation of mcm(5)S(2)U at tRNA wobble positions of cytosolic tRNA(Lys), tRNA(Glu) and tRNA(Gln). Acts by mediating the C-terminal thiocarboxylation of sulfur carrier URM1. Its N-terminus first activates URM1 as acyl-adenylate (-COAMP), then the persulfide sulfur on the catalytic cysteine is transferred to URM1 to form thiocarboxylation (-COSH) of its C-terminus. The reaction probably involves hydrogen sulfide that is generated from the persulfide intermediate and that acts as a nucleophile towards URM1. Subsequently, a transient disulfide bond is formed. Does not use thiosulfate as sulfur donor; NFS1 probably acting as a sulfur donor for thiocarboxylation reactions. Prior mcm(5) tRNA modification by the elongator complex is required for 2-thiolation. May also be involved in protein urmylation. The sequence is that of Adenylyltransferase and sulfurtransferase UBA4 from Meyerozyma guilliermondii (strain ATCC 6260 / CBS 566 / DSM 6381 / JCM 1539 / NBRC 10279 / NRRL Y-324) (Yeast).